Reading from the N-terminus, the 363-residue chain is Pyrimidine monooxygenase RutA (363 aa).

FMN is bound by residues 49 to 50, asparagine 115, glutamate 124, 140 to 141, and serine 190; these read IK and RY.

The protein belongs to the NtaA/SnaA/DszA monooxygenase family. RutA subfamily.

It catalyses the reaction uracil + FMNH2 + NADH + O2 = (Z)-3-ureidoacrylate + FMN + NAD(+) + H2O + H(+). It carries out the reaction thymine + FMNH2 + NADH + O2 = (Z)-2-methylureidoacrylate + FMN + NAD(+) + H2O + H(+). Catalyzes the pyrimidine ring opening between N-3 and C-4 by an unusual flavin hydroperoxide-catalyzed mechanism, adding oxygen atoms in the process to yield ureidoacrylate peracid, that immediately reacts with FMN forming ureidoacrylate and FMN-N(5)-oxide. The FMN-N(5)-oxide reacts spontaneously with NADH to produce FMN. Requires the flavin reductase RutF to regenerate FMN in vivo. This is Pyrimidine monooxygenase RutA from Pantoea ananatis (strain LMG 20103).